The sequence spans 50 residues: Small ribosomal subunit protein eS31 (50 aa).

4 residues coordinate Zn(2+): Cys22, Cys25, Cys40, and Cys43. The C4-type zinc finger occupies 22–43 (CPRCGPGVFMADHGDRWACGKC).

It belongs to the eukaryotic ribosomal protein eS31 family. In terms of assembly, part of the 30S ribosomal subunit. Zn(2+) serves as cofactor.

This Pyrococcus furiosus (strain ATCC 43587 / DSM 3638 / JCM 8422 / Vc1) protein is Small ribosomal subunit protein eS31.